The following is a 476-amino-acid chain: Riboflavin transporter rft-2 (476 aa).

The chain crosses the membrane as a helical span at residues 1-21 (MGCSAATFILVALFGSSSWMG). The Cytoplasmic segment spans residues 22 to 41 (TNSVWMQLPLLTSELPEQWN). A helical membrane pass occupies residues 42-62 (LPSYLAGVVQIACIVPLIYTI). Over 63–75 (LHKGVKSFTIPTA) the chain is Extracellular. The chain crosses the membrane as a helical span at residues 76–96 (PLIIALLSLACCCQLGLSFFW). Residues 97–113 (SDYSEIFGAPRSWPLYS) lie on the Cytoplasmic side of the membrane. Residues 114–134 (LLFGLAIVNAMSNVLFMPFMA) traverse the membrane as a helical segment. At 135 to 140 (QFHPAY) the chain is on the extracellular side. A helical transmembrane segment spans residues 141 to 161 (LNAYFVGMGLSSLAPSLLSLA). Over 162 to 185 (QGTSMFKCDEKGVAERFPPNFSVS) the chain is Cytoplasmic. The helical transmembrane segment at 186–206 (IFFFVIFSFTCVALFAFIALY) threads the bilayer. Over 207-306 (RSGAHTHFAT…HPVDYITGVK (100 aa)) the chain is Extracellular. Residues 215–249 (ATPNKKEPNEGTPLKKDLNNTSSSRKGDDEDESPI) are disordered. A compositionally biased stretch (basic and acidic residues) spans 218-232 (NKKEPNEGTPLKKDL). Asparagine 233 carries an N-linked (GlcNAc...) asparagine glycan. The helical transmembrane segment at 307–327 (FTFLLFTTALVNAQMNGIITS) threads the bilayer. Over 328–342 (VQSYAALPYSQATYH) the chain is Cytoplasmic. Residues 343–363 (FAVTLSNVVSPLSSFLPFFIS) form a helical membrane-spanning segment. Over 364 to 366 (VRS) the chain is Extracellular. Residues 367 to 387 (IPVLAILTACSTAMTAFIVYL) form a helical membrane-spanning segment. At 388-393 (AALSPN) the chain is on the cytoplasmic side. Residues 394–414 (LIFNSVTIGSALSIGGSLIAA) form a helical membrane-spanning segment. At 415-437 (GLHSYLRVVFASLLREGHQSESR) the chain is on the extracellular side. Residues 438-458 (LFWCGVFIQIGSFIGSAVMFP) form a helical membrane-spanning segment. Residues 459-476 (LVNIAHLFTSAPQCKSIS) lie on the Cytoplasmic side of the membrane.

It belongs to the riboflavin transporter family. As to expression, expressed in intestine and pharynx.

Its subcellular location is the cell membrane. The catalysed reaction is riboflavin(in) = riboflavin(out). Riboflavin transporter. The chain is Riboflavin transporter rft-2 from Caenorhabditis elegans.